The following is a 446-amino-acid chain: Putative RNA-ligase (446 aa).

The protein belongs to the asfivirus M448R family.

It localises to the virion. The chain is Putative RNA-ligase from African swine fever virus (isolate Tick/Malawi/Lil 20-1/1983) (ASFV).